The chain runs to 616 residues: D-glutamate cyclase, mitochondrial (616 aa).

A mitochondrion-targeting transit peptide spans 1–28; sequence MPFTLHLRSRLPSAIRSLILQKKPNIRN.

Belongs to the D-glutamate cyclase family.

The protein resides in the mitochondrion matrix. It carries out the reaction D-glutamate = 5-oxo-D-proline + H2O. Functionally, D-glutamate cyclase that converts D-glutamate to 5-oxo-D-proline. The protein is D-glutamate cyclase, mitochondrial of Homo sapiens (Human).